We begin with the raw amino-acid sequence, 408 residues long: Probable ethanolamine permease EutH (408 aa).

Transmembrane regions (helical) follow at residues 1–21 (MGIN…AAVD), 61–81 (AMVG…PVII), 89–109 (ANPS…FFLA), 126–146 (ILGS…LGII), 155–175 (ALGV…GGLI), 192–212 (FALI…VALG), 230–250 (FLVA…LLGW), 274–294 (IEVI…VLLL), 313–333 (NIAA…FGMM), 342–362 (VINC…LGFA), and 369–389 (MIFP…GVAM).

This sequence belongs to the EutH family.

The protein localises to the cell inner membrane. It carries out the reaction ethanolamine(in) = ethanolamine(out). It participates in amine and polyamine degradation; ethanolamine degradation. In terms of biological role, probably involved in the diffusion of protonated ethanolamine (EA) into the cell at low pH. At low pH most EA is protonated, and this permease becomes necessary. Contributes to bacterial survival and replication in acidified macrophage vacuoles, but not to bacterial uptake by macrophages. Functionally, expression of the eut operon allows this bacteria to use ethanolamine (EA) as a carbon, nitrogen and energy source. It relies on cobalamin (vitamin B12) both as a cofactor for the ethanolamine ammonia-lyase (EAL) activity and to induce the operon. EA enhances bacterial survival in macrophages in a concentration-dependent manner, suggesting it is an important nutrient during infection. The chain is Probable ethanolamine permease EutH from Salmonella typhimurium (strain LT2 / SGSC1412 / ATCC 700720).